The following is a 484-amino-acid chain: Glycogen synthase (484 aa).

Lys-15 contributes to the ADP-alpha-D-glucose binding site.

It belongs to the glycosyltransferase 1 family. Bacterial/plant glycogen synthase subfamily.

The enzyme catalyses [(1-&gt;4)-alpha-D-glucosyl](n) + ADP-alpha-D-glucose = [(1-&gt;4)-alpha-D-glucosyl](n+1) + ADP + H(+). It functions in the pathway glycan biosynthesis; glycogen biosynthesis. In terms of biological role, synthesizes alpha-1,4-glucan chains using ADP-glucose. In Bacillus subtilis (strain 168), this protein is Glycogen synthase (glgA).